We begin with the raw amino-acid sequence, 211 residues long: Uracil phosphoribosyltransferase (211 aa).

Residues Arg78, Arg103, and 130–138 (DPMLATGGT) each bind 5-phospho-alpha-D-ribose 1-diphosphate. Uracil-binding positions include Ile195 and 200–202 (GDA). 5-phospho-alpha-D-ribose 1-diphosphate is bound at residue Asp201.

This sequence belongs to the UPRTase family. It depends on Mg(2+) as a cofactor.

It catalyses the reaction UMP + diphosphate = 5-phospho-alpha-D-ribose 1-diphosphate + uracil. It functions in the pathway pyrimidine metabolism; UMP biosynthesis via salvage pathway; UMP from uracil: step 1/1. Its activity is regulated as follows. Allosterically activated by GTP. Functionally, catalyzes the conversion of uracil and 5-phospho-alpha-D-ribose 1-diphosphate (PRPP) to UMP and diphosphate. The sequence is that of Uracil phosphoribosyltransferase from Streptomyces griseus subsp. griseus (strain JCM 4626 / CBS 651.72 / NBRC 13350 / KCC S-0626 / ISP 5235).